The sequence spans 320 residues: R2-like ligand binding oxidase (320 aa).

Residues Glu-68, Glu-101, and His-104 each coordinate Mn(2+). The segment at residues 71-162 (VTKDIQPFMS…AAQVRASVVY (92 aa)) is a cross-link (3-(O4'-tyrosyl)-valine (Val-Tyr)). A Fe cation-binding site is contributed by Glu-101. Fe cation is bound by residues Glu-167, Glu-202, and His-205.

It belongs to the ribonucleoside diphosphate reductase small chain family. R2-like ligand binding oxidase subfamily. Homodimer. Fe cation is required as a cofactor. Requires Mn(2+) as cofactor.

In terms of biological role, probable oxidase that might be involved in lipid metabolism. The protein is R2-like ligand binding oxidase (nrdB) of Mycolicibacterium smegmatis (strain ATCC 700084 / mc(2)155) (Mycobacterium smegmatis).